A 480-amino-acid polypeptide reads, in one-letter code: Probable cytosol aminopeptidase (480 aa).

Residues Lys-248 and Asp-253 each coordinate Mn(2+). Lys-260 is a catalytic residue. Residues Asp-271, Asp-330, and Glu-332 each coordinate Mn(2+). Arg-334 is a catalytic residue.

This sequence belongs to the peptidase M17 family. Requires Mn(2+) as cofactor.

The protein localises to the cytoplasm. The enzyme catalyses Release of an N-terminal amino acid, Xaa-|-Yaa-, in which Xaa is preferably Leu, but may be other amino acids including Pro although not Arg or Lys, and Yaa may be Pro. Amino acid amides and methyl esters are also readily hydrolyzed, but rates on arylamides are exceedingly low.. It carries out the reaction Release of an N-terminal amino acid, preferentially leucine, but not glutamic or aspartic acids.. Functionally, presumably involved in the processing and regular turnover of intracellular proteins. Catalyzes the removal of unsubstituted N-terminal amino acids from various peptides. In Solibacter usitatus (strain Ellin6076), this protein is Probable cytosol aminopeptidase.